Consider the following 76-residue polypeptide: Protein sprouty homolog 1 (76 aa).

In terms of domain architecture, SPR spans 1 to 52; sequence NPCSCSQSHCCSRYLCMGAMSLFLPCLLCYPPAKGCLKLCRGCYDRVNRPGC.

This sequence belongs to the sprouty family. Brain and interlimb region.

The protein localises to the cytoplasm. Its subcellular location is the membrane. Inhibits fibroblast growth factor (FGF)-induced retinal lens fiber differentiation. Inhibits TGFB-induced epithelial-to-mesenchymal transition in lens epithelial cells. The protein is Protein sprouty homolog 1 (SPRY1) of Gallus gallus (Chicken).